We begin with the raw amino-acid sequence, 242 residues long: Probable 2-phosphosulfolactate phosphatase (242 aa).

Belongs to the ComB family. Mg(2+) is required as a cofactor.

It catalyses the reaction (2R)-O-phospho-3-sulfolactate + H2O = (2R)-3-sulfolactate + phosphate. This chain is Probable 2-phosphosulfolactate phosphatase, found in Synechococcus sp. (strain JA-3-3Ab) (Cyanobacteria bacterium Yellowstone A-Prime).